The sequence spans 553 residues: Dihydroxy-acid dehydratase (553 aa).

Asp78 provides a ligand contact to Mg(2+). Cys119 serves as a coordination point for [2Fe-2S] cluster. Positions 120 and 121 each coordinate Mg(2+). At Lys121 the chain carries N6-carboxylysine. Cys193 is a binding site for [2Fe-2S] cluster. Glu441 contributes to the Mg(2+) binding site. The active-site Proton acceptor is Ser467.

This sequence belongs to the IlvD/Edd family. Homodimer. The cofactor is [2Fe-2S] cluster. Mg(2+) serves as cofactor.

It catalyses the reaction (2R)-2,3-dihydroxy-3-methylbutanoate = 3-methyl-2-oxobutanoate + H2O. The catalysed reaction is (2R,3R)-2,3-dihydroxy-3-methylpentanoate = (S)-3-methyl-2-oxopentanoate + H2O. Its pathway is amino-acid biosynthesis; L-isoleucine biosynthesis; L-isoleucine from 2-oxobutanoate: step 3/4. The protein operates within amino-acid biosynthesis; L-valine biosynthesis; L-valine from pyruvate: step 3/4. Functionally, functions in the biosynthesis of branched-chain amino acids. Catalyzes the dehydration of (2R,3R)-2,3-dihydroxy-3-methylpentanoate (2,3-dihydroxy-3-methylvalerate) into 2-oxo-3-methylpentanoate (2-oxo-3-methylvalerate) and of (2R)-2,3-dihydroxy-3-methylbutanoate (2,3-dihydroxyisovalerate) into 2-oxo-3-methylbutanoate (2-oxoisovalerate), the penultimate precursor to L-isoleucine and L-valine, respectively. The chain is Dihydroxy-acid dehydratase from Geobacter metallireducens (strain ATCC 53774 / DSM 7210 / GS-15).